The chain runs to 506 residues: UBX domain-containing protein 4 (506 aa).

The interval 1 to 199 is interaction with UBQLN1; it reads MLWFQGAIPA…PAEDLTVRVE (199 aa). The Cytoplasmic segment spans residues 1–411; it reads MLWFQGAIPA…VHSSSGDIWT (411 aa). The segment at 110–194 is disordered; the sequence is QQMHSSKGEA…CSNQRPAEDL (85 aa). Composition is skewed to polar residues over residues 120–136 and 153–167; these read SVTNDNQSESSVSTPSA and LCETPATSDIKSDTA. In terms of domain architecture, UBX spans 313 to 391; it reads DRSTIARIQF…ELAPSASVVL (79 aa). Residues 412 to 432 lie within the membrane without spanning it; that stretch reads LLGTVLYPFLAIWRLISNFLF. Residues 433–506 are Cytoplasmic-facing; the sequence is SNPPPAQTSA…TWNGNSTQQM (74 aa). The interval 437–506 is disordered; sequence PAQTSARATS…TWNGNSTQQM (70 aa). A compositionally biased stretch (low complexity) spans 444 to 456; sequence ATSTEPSNSASSS. Over residues 457–489 the composition is skewed to basic and acidic residues; sequence KSEKREPVRKRMLEKRGEDFKKEGKIYRLRTQD. Thr487 is subject to Phosphothreonine. The span at 496–506 shows a compositional bias: polar residues; sequence NTWNGNSTQQM.

In terms of assembly, directly interacts with VCP. Interacts with UBQLN1. Forms a complex with VCP and UBQLN1. In terms of tissue distribution, expressed in many tissues, including brain, heart, kidney, liver, muscle and spleen (at protein level).

Its subcellular location is the endoplasmic reticulum membrane. The protein resides in the nucleus envelope. Functionally, involved in endoplasmic reticulum-associated protein degradation (ERAD). Acts as a platform to recruit both UBQLN1 and VCP to the ER during ERAD. This Mus musculus (Mouse) protein is UBX domain-containing protein 4 (Ubxn4).